A 281-amino-acid chain; its full sequence is Pantothenate synthetase (281 aa).

26-33 lines the ATP pocket; the sequence is MGSLHEGH. Histidine 33 (proton donor) is an active-site residue. Glutamine 57 provides a ligand contact to (R)-pantoate. Glutamine 57 contacts beta-alanine. 144–147 is an ATP binding site; it reads GKKD. Residue glutamine 150 coordinates (R)-pantoate. ATP is bound by residues alanine 173 and 181 to 184; that span reads LSSR.

This sequence belongs to the pantothenate synthetase family. Homodimer.

The protein localises to the cytoplasm. It carries out the reaction (R)-pantoate + beta-alanine + ATP = (R)-pantothenate + AMP + diphosphate + H(+). Its pathway is cofactor biosynthesis; (R)-pantothenate biosynthesis; (R)-pantothenate from (R)-pantoate and beta-alanine: step 1/1. In terms of biological role, catalyzes the condensation of pantoate with beta-alanine in an ATP-dependent reaction via a pantoyl-adenylate intermediate. This is Pantothenate synthetase from Methylibium petroleiphilum (strain ATCC BAA-1232 / LMG 22953 / PM1).